Here is an 854-residue protein sequence, read N- to C-terminus: MPRNVPEVNGVYRHGACELWCRAMAHALLKRSGVRRGLGGREGPLKRLRLAVEDFVRTTSESEACESRSAVARSRPGGRKSRKELRKEKRHLRKARRLQRTVGSGSGDQGGNVGLNDGPETRRPPTEVRPTPAKATATPAKASAPSTNTKASAAQPKAKAKGAPGKPGPATATARKRALLAANEEEDREIRKLERCLGLHKRKKKGDGSSVPLSFARDGLDYILGALECGSGGGLYESSEEEEEEKLETGQTVLESDLESNSKESEEDPDWQVLQEDQEDVNSKRRGEAESGTRGNKGTKKVRFAEVVEKSRSSSEDDIEQQESHSVESGEKYIPPRLRNEEVIDVHKKEELDRLKKHVKGLINRLSEPNMASISGQLEELYMAHSRKDMNDTLTTALMDACVTASAMPSRLMMEHVFLVSILHHTVGIEVGACFLEAVVKKFDAIYRDGGEGKELDNLFTMIAHLYNFHVVQSILIFDILKKLVGTFTEKDIELILLMLKNVGFALRKDDALSLKELITEAQTQASGAGNKFQDQNRVRFMLETMLALKNNDLRKIPGYNPEPVEKLKKLQRTLVRNAGSGSETRLRISWDGILNAEQTGRWWIVGSAWSGTPMIDNSHHIQLQKPLAGMASSKMLELARKQRMNTDVRRIIFCTLMTSEDFLDAFEKLLKLGLKDQQEREIVHILMDCCLQEKTYNPFYAFLASKFCDYERRFQMTFQFSIWDKFRDLENLPDTKFSNLVHLLAHLLRTKSLPLSVLKVVEFSELDKPRVHFLRRVLTALLMETEDDDLAVIFSRVSDNPKLGMLREGLKLFIGHFLLKHTQAHQSAEEASLLREKAGLASKSLQGKAILRM.

Residues 2 to 275 are necessary for nucleolar localization and for targeting PPP1CA to the nucleolus; it reads PRNVPEVNGV…EEDPDWQVLQ (274 aa). Ser-60 carries the post-translational modification Phosphoserine. Disordered stretches follow at residues 66-215 and 231-333; these read ESRS…PLSF and SGGG…GEKY. Residues 76 to 99 show a composition bias toward basic residues; it reads PGGRKSRKELRKEKRHLRKARRLQ. Positions 104-113 are enriched in gly residues; the sequence is SGSGDQGGNV. Over residues 128–173 the composition is skewed to low complexity; the sequence is VRPTPAKATATPAKASAPSTNTKASAAQPKAKAKGAPGKPGPATAT. Basic and acidic residues predominate over residues 188-197; sequence REIRKLERCL. Residues 265 to 280 are compositionally biased toward acidic residues; sequence SEEDPDWQVLQEDQED. Composition is skewed to basic and acidic residues over residues 281 to 291, 303 to 315, and 322 to 331; these read VNSKRRGEAES, RFAEVVEKSRSSS, and QESHSVESGE. A Required for efficient binding to PPP1CA and for targeting PPP1CA to the nucleolus motif is present at residues 301–304; it reads KVRF. Phosphoserine is present on residues Ser-311, Ser-314, and Ser-315. Positions 356-553 constitute an MIF4G domain; the sequence is KKHVKGLINR…ETMLALKNND (198 aa). Residues 648-764 form the MI domain; that stretch reads DVRRIIFCTL…PLSVLKVVEF (117 aa).

This sequence belongs to the CWC22 family. In terms of assembly, may interact with EIF4A1, EIF4A2 and EIF4A3. Interacts with PPP1CA and PPP1CC.

The protein localises to the nucleus. The protein resides in the nucleolus. In terms of biological role, plays a role in targeting PPP1CA to the nucleolus. In Mus musculus (Mouse), this protein is Nucleolar MIF4G domain-containing protein 1 (Nom1).